The primary structure comprises 295 residues: Bifunctional protein FolD 1 (295 aa).

NADP(+) contacts are provided by residues 165–167 (GKS), isoleucine 190, and isoleucine 231.

The protein belongs to the tetrahydrofolate dehydrogenase/cyclohydrolase family. As to quaternary structure, homodimer.

It carries out the reaction (6R)-5,10-methylene-5,6,7,8-tetrahydrofolate + NADP(+) = (6R)-5,10-methenyltetrahydrofolate + NADPH. It catalyses the reaction (6R)-5,10-methenyltetrahydrofolate + H2O = (6R)-10-formyltetrahydrofolate + H(+). It functions in the pathway one-carbon metabolism; tetrahydrofolate interconversion. Catalyzes the oxidation of 5,10-methylenetetrahydrofolate to 5,10-methenyltetrahydrofolate and then the hydrolysis of 5,10-methenyltetrahydrofolate to 10-formyltetrahydrofolate. In Rhizorhabdus wittichii (strain DSM 6014 / CCUG 31198 / JCM 15750 / NBRC 105917 / EY 4224 / RW1) (Sphingomonas wittichii), this protein is Bifunctional protein FolD 1.